Reading from the N-terminus, the 247-residue chain is 2,3-bisphosphoglycerate-dependent phosphoglycerate mutase (247 aa).

Substrate is bound by residues 8-15, 21-22, arginine 60, 87-90, lysine 98, 114-115, and 183-184; these read RHGESTWN, TG, ERHY, RR, and GN. The active-site Tele-phosphohistidine intermediate is histidine 9. Glutamate 87 acts as the Proton donor/acceptor in catalysis.

The protein belongs to the phosphoglycerate mutase family. BPG-dependent PGAM subfamily. In terms of assembly, homodimer.

The enzyme catalyses (2R)-2-phosphoglycerate = (2R)-3-phosphoglycerate. It functions in the pathway carbohydrate degradation; glycolysis; pyruvate from D-glyceraldehyde 3-phosphate: step 3/5. Functionally, catalyzes the interconversion of 2-phosphoglycerate and 3-phosphoglycerate. The chain is 2,3-bisphosphoglycerate-dependent phosphoglycerate mutase from Acidovorax ebreus (strain TPSY) (Diaphorobacter sp. (strain TPSY)).